A 200-amino-acid polypeptide reads, in one-letter code: MSFSPLIRQLIDALRILPGVGQKTAQRMALQLLERDRSGGTRLAQALSQAMEGVGHCRQCRTLTEQELCPQCADPRRDDTQLCVVEGPVDVYAVEQTGYRGRYFVLKGHLSPLDGLGPEAIGIPQLMARIEEQGTFSEVILATNPTVEGEATAHYIAQLLAEKGLTATRIAHGVPLGGELELVDGGTLAHAFAGRRPIAL.

The C4-type zinc-finger motif lies at 57–72 (CRQCRTLTEQELCPQC). Residues 80–175 (TQLCVVEGPV…TATRIAHGVP (96 aa)) form the Toprim domain.

The protein belongs to the RecR family.

Functionally, may play a role in DNA repair. It seems to be involved in an RecBC-independent recombinational process of DNA repair. It may act with RecF and RecO. The protein is Recombination protein RecR of Pseudomonas entomophila (strain L48).